Consider the following 246-residue polypeptide: MAMSSYLINSNYVDPKFPPCEEYSQSDYLPSHSPDYYSAQRQDPSFQHESIYHQRSGCADPPYSSCQGPGQPAAVISPRGHVLPTTALSTPLPEPSHHCDSVTPSPPPACGQTPTSQNTSTVSSRKDPVVYPWMKKVHVNIVSPNYSGGEPKRSRTAYTRQQVLELEKEFHYNRYLTRRRRVEIAHTLCLSERQIKIWFQNRRMKWKKDHKLPNTKIRSNSASTNSSGCPTLCSNQSRASGPPPSL.

The segment at 23–125 is disordered; that stretch reads YSQSDYLPSH…SQNTSTVSSR (103 aa). Polar residues-rich tracts occupy residues 39-48 and 112-123; these read AQRQDPSFQH and QTPTSQNTSTVS. Positions 130–135 match the Antp-type hexapeptide motif; that stretch reads VYPWMK. A DNA-binding region (homeobox) is located at residues 151-210; the sequence is PKRSRTAYTRQQVLELEKEFHYNRYLTRRRRVEIAHTLCLSERQIKIWFQNRRMKWKKDH. The tract at residues 210–246 is disordered; sequence HKLPNTKIRSNSASTNSSGCPTLCSNQSRASGPPPSL. A compositionally biased stretch (polar residues) spans 216–239; sequence KIRSNSASTNSSGCPTLCSNQSRA.

Belongs to the Antp homeobox family. Deformed subfamily.

It localises to the nucleus. Its function is as follows. Sequence-specific transcription factor which is part of a developmental regulatory system that provides cells with specific positional identities on the anterior-posterior axis. This chain is Homeobox protein Hox-B4a (hoxb4a), found in Danio rerio (Zebrafish).